The chain runs to 191 residues: Penicillin-binding protein activator LpoB (191 aa).

Residues 1 to 16 (MKRILFVILSTMLLAS) form the signal peptide. Cys-17 carries the N-palmitoyl cysteine lipid modification. Cys-17 carries the S-diacylglycerol cysteine lipid modification. Positions 25-48 (QPAPVTPVEPKEKQETTPIEPSEK) are disordered.

The protein belongs to the LpoB family. In terms of assembly, interacts with PBP1b.

It localises to the cell outer membrane. Its function is as follows. Regulator of peptidoglycan synthesis that is essential for the function of penicillin-binding protein 1B (PBP1b). This Xenorhabdus nematophila (strain ATCC 19061 / DSM 3370 / CCUG 14189 / LMG 1036 / NCIMB 9965 / AN6) protein is Penicillin-binding protein activator LpoB.